Reading from the N-terminus, the 435-residue chain is Acetyltransferase atnC (435 aa).

The next 3 helical transmembrane spans lie at 10–30, 40–60, and 68–88; these read AFAN…FLII, YFGI…APTL, and SFLA…LLIL. N-linked (GlcNAc...) asparagine glycosylation is present at asparagine 203. The next 3 membrane-spanning stretches (helical) occupy residues 306-326, 333-353, and 370-390; these read FLVF…MGLS, IPYF…QAFY, and VVGF…YMFP. N-linked (GlcNAc...) asparagine glycosylation occurs at asparagine 406. The chain crosses the membrane as a helical span at residues 407 to 427; it reads LTEVIGMPMMWGLLGTFGMLV.

This sequence belongs to the wax synthase family.

It localises to the membrane. It participates in secondary metabolite biosynthesis; terpenoid biosynthesis. In terms of biological role, acetyltransferase; part of the gene cluster that mediates the biosynthesis of the meroterpenoids arthripenoids. The pathway begins with the HR-PKS atnH that catalyzes two chain-extension steps to form a reduced triketide, which then primes the SAT domain in the NR-PKS atnG to initiate three more cycles of extension to give a linear hexaketide corresponding to the polyketide part of arthripenoids. The FAD-dependent monooxygenase atnJ then performs an oxidative decarboxylation at C11 of the atnH/atnG product, via an electrophilic aromatic hydroxylation with concomitant ipso-decarboxylation. The membrane-bound polyprenyl transferase atnF then introduces a farnesyl group before the FAD-dependent monooxygenase atnK functions as the first epoxidase on terminal C12'-C13' olefin, followed by a second epoxidation on C7'-C8' catalyzed by atnA. The terpene cyclase/mutase atnI then initiates the sequential tricyclic ring formation through protonation of the terminal epoxide and catalyzes the regioselective and stereoselective 6/6/6-tricyclic ring formation. The cytochrome P450 monooxygenase atnM is responsible for hydroxylating both C1' and C10'. The next steps may involve ketoreduction and acetyl transfer by the ketoreductase atnB and the acetyltransferase atnC, and lead to the production of arthripenoid B, the final biosynthetic product of the atn cluster. The hydroquinone moiety in arthripenoid B is prone to undergo spontaneous oxidation to afford a benzoquinone compound, a key intermediate for generating structure diversity. For instance, addition of a cysteine followed by ring contraction gives arthripenoid A, tautomerization gives the main product arthripenoid C, addition of a molecular of water or amine affords arthripenoid D or E, respectively, and loss of one water forms arthripenoid F. This chain is Acetyltransferase atnC, found in Arthrinium sp.